The chain runs to 175 residues: Methylated-DNA--protein-cysteine methyltransferase (175 aa).

Cys-142 acts as the Nucleophile; methyl group acceptor in catalysis.

It belongs to the MGMT family.

It is found in the cytoplasm. It carries out the reaction a 6-O-methyl-2'-deoxyguanosine in DNA + L-cysteinyl-[protein] = S-methyl-L-cysteinyl-[protein] + a 2'-deoxyguanosine in DNA. The enzyme catalyses a 4-O-methyl-thymidine in DNA + L-cysteinyl-[protein] = a thymidine in DNA + S-methyl-L-cysteinyl-[protein]. Involved in the cellular defense against the biological effects of O6-methylguanine (O6-MeG) and O4-methylthymine (O4-MeT) in DNA. Repairs the methylated nucleobase in DNA by stoichiometrically transferring the methyl group to a cysteine residue in the enzyme. This is a suicide reaction: the enzyme is irreversibly inactivated. This is Methylated-DNA--protein-cysteine methyltransferase from Thermococcus barophilus (strain DSM 11836 / MP).